Reading from the N-terminus, the 60-residue chain is Cytochrome c oxidase subunit 7, mitochondrial (60 aa).

The Mitochondrial matrix segment spans residues 2 to 29 (ANKVIQLQKIFQSSTKPLWWRHPRSALY). Residues 30 to 53 (LYPFYAIFAVAVVTPLLYIPNAIR) form a helical membrane-spanning segment. Residues 54–60 (GIKAKKA) lie on the Mitochondrial intermembrane side of the membrane.

It belongs to the cytochrome c oxidase VIIa family. In terms of assembly, component of the cytochrome c oxidase (complex IV, CIV), a multisubunit enzyme composed of 12 subunits. The complex is composed of a catalytic core of 3 subunits COX1, COX2 and COX3, encoded in the mitochondrial DNA, and 9 supernumerary subunits COX4, COX5A (or COX5B), COX6, COX7, COX8, COX9, COX12, COX13 and COX26, which are encoded in the nuclear genome. The complex exists as a monomer or a dimer and forms supercomplexes (SCs) in the inner mitochondrial membrane with a dimer of ubiquinol-cytochrome c oxidoreductase (cytochrome b-c1 complex, complex III, CIII), resulting in 2 different assemblies (supercomplexes III(2)IV and III(2)IV(2)).

Its subcellular location is the mitochondrion inner membrane. Its pathway is energy metabolism; oxidative phosphorylation. In terms of biological role, component of the cytochrome c oxidase, the last enzyme in the mitochondrial electron transport chain which drives oxidative phosphorylation. The respiratory chain contains 3 multisubunit complexes succinate dehydrogenase (complex II, CII), ubiquinol-cytochrome c oxidoreductase (cytochrome b-c1 complex, complex III, CIII) and cytochrome c oxidase (complex IV, CIV), that cooperate to transfer electrons derived from NADH and succinate to molecular oxygen, creating an electrochemical gradient over the inner membrane that drives transmembrane transport and the ATP synthase. Cytochrome c oxidase is the component of the respiratory chain that catalyzes the reduction of oxygen to water. Electrons originating from reduced cytochrome c in the intermembrane space (IMS) are transferred via the dinuclear copper A center (CU(A)) of COX2 and heme A of COX1 to the active site in COX1, a binuclear center (BNC) formed by heme A3 and copper B (CU(B)). The BNC reduces molecular oxygen to 2 water molecules using 4 electrons from cytochrome c in the IMS and 4 protons from the mitochondrial matrix. The polypeptide is Cytochrome c oxidase subunit 7, mitochondrial (COX7) (Saccharomyces cerevisiae (strain ATCC 204508 / S288c) (Baker's yeast)).